The chain runs to 118 residues: Protein Rev (118 aa).

Phosphoserine; by host CK2 is present on residues S5 and S8. A homomultimerization region spans residues 18–26; that stretch reads LIKFLYQSN. Residues 23–46 form a disordered region; it reads YQSNPPPSPEGTRQARRNRRRRWR. The short motif at 34–50 is the Nuclear localization signal and RNA-binding (RRE) element; that stretch reads TRQARRNRRRRWRARQR. The span at 36–46 shows a compositional bias: basic residues; sequence QARRNRRRRWR. The Nuclear export signal and binding to XPO1 signature appears at 73-84; that stretch reads LQLPPLERLNLN. A disordered region spans residues 87 to 118; the sequence is EDCRTSGTQGVGHPQISVESPTVLESGTEEQC. Phosphoserine; by host is present on S92. The span at 103 to 112 shows a compositional bias: polar residues; that stretch reads SVESPTVLES.

Belongs to the HIV-1 REV protein family. Homomultimer; when bound to the RRE. Multimeric assembly is essential for activity and may involve XPO1. Binds to human KPNB1, XPO1, TNPO1, RANBP5 and IPO7. Interacts with the viral Integrase. Interacts with human KHDRBS1. Interacts with human NAP1; this interaction decreases Rev multimerization and stimulates its activity. Interacts with human DEAD-box helicases DDX3 and DDX24; these interactions may serve for viral RNA export to the cytoplasm and packaging, respectively. Interacts with human PSIP1; this interaction may inhibit HIV-1 DNA integration by promoting dissociation of the Integrase-LEDGF/p75 complex. In terms of processing, asymmetrically arginine dimethylated at one site by host PRMT6. Methylation impairs the RNA-binding activity and export of viral RNA from the nucleus to the cytoplasm. Phosphorylated by protein kinase CK2. Presence of, and maybe binding to the N-terminus of the regulatory beta subunit of CK2 is necessary for CK2-mediated Rev's phosphorylation.

The protein resides in the host nucleus. The protein localises to the host nucleolus. It is found in the host cytoplasm. Escorts unspliced or incompletely spliced viral pre-mRNAs (late transcripts) out of the nucleus of infected cells. These pre-mRNAs carry a recognition sequence called Rev responsive element (RRE) located in the env gene, that is not present in fully spliced viral mRNAs (early transcripts). This function is essential since most viral proteins are translated from unspliced or partially spliced pre-mRNAs which cannot exit the nucleus by the pathway used by fully processed cellular mRNAs. Rev itself is translated from a fully spliced mRNA that readily exits the nucleus. Rev's nuclear localization signal (NLS) binds directly to KPNB1/Importin beta-1 without previous binding to KPNA1/Importin alpha-1. KPNB1 binds to the GDP bound form of RAN (Ran-GDP) and targets Rev to the nucleus. In the nucleus, the conversion from Ran-GDP to Ran-GTP dissociates Rev from KPNB1 and allows Rev's binding to the RRE in viral pre-mRNAs. Rev multimerization on the RRE via cooperative assembly exposes its nuclear export signal (NES) to the surface. Rev can then form a complex with XPO1/CRM1 and Ran-GTP, leading to nuclear export of the complex. Conversion from Ran-GTP to Ran-GDP mediates dissociation of the Rev/RRE/XPO1/RAN complex, so that Rev can return to the nucleus for a subsequent round of export. Beside KPNB1, also seems to interact with TNPO1/Transportin-1, RANBP5/IPO5 and IPO7/RANBP7 for nuclear import. The nucleoporin-like HRB/RIP is an essential cofactor that probably indirectly interacts with Rev to release HIV RNAs from the perinuclear region to the cytoplasm. The sequence is that of Protein Rev from Human immunodeficiency virus type 1 group M subtype D (isolate ELI) (HIV-1).